The chain runs to 636 residues: Sodium-dependent nutrient amino acid transporter 1 (636 aa).

The interval Met1–Thr40 is disordered. Residues Met1–Glu50 are Cytoplasmic-facing. Residues Pro7–Thr40 show a composition bias toward low complexity. 3 consecutive transmembrane segments (helical) span residues Phe51–Thr71, Gly78–Leu98, and Thr131–Val151. N-linked (GlcNAc...) asparagine glycosylation occurs at Asn184. A run of 9 helical transmembrane segments spans residues Pro225–Met245, Ala254–Val274, Ala303–Ser323, Ile337–Leu357, Leu397–Leu417, Val436–Gly456, Thr469–Val489, Cys511–Ile531, and Val547–Tyr567.

The protein belongs to the sodium:neurotransmitter symporter (SNF) (TC 2.A.22) family.

The protein resides in the membrane. Functionally, unusual broad substrate spectrum amino acid:sodium cotransporter that promotes absorption of the D isomers of essential amino acids. Neutral amino acids are the preferred substrates, especially methionine and phenylalanine. The chain is Sodium-dependent nutrient amino acid transporter 1 from Drosophila grimshawi (Hawaiian fruit fly).